We begin with the raw amino-acid sequence, 539 residues long: Phosphoenolpyruvate carboxykinase (ATP) (539 aa).

3 residues coordinate substrate: Arg-61, Tyr-195, and Lys-201. ATP-binding positions include Lys-201, His-220, and 238 to 246 (GLSGTGKTT). The Mn(2+) site is built by Lys-201 and His-220. Asp-259 is a Mn(2+) binding site. Glu-287, Arg-325, and Thr-450 together coordinate ATP. Arg-325 lines the substrate pocket.

This sequence belongs to the phosphoenolpyruvate carboxykinase (ATP) family. The cofactor is Mn(2+).

It is found in the cytoplasm. The catalysed reaction is oxaloacetate + ATP = phosphoenolpyruvate + ADP + CO2. The protein operates within carbohydrate biosynthesis; gluconeogenesis. Involved in the gluconeogenesis. Catalyzes the conversion of oxaloacetate (OAA) to phosphoenolpyruvate (PEP) through direct phosphoryl transfer between the nucleoside triphosphate and OAA. The polypeptide is Phosphoenolpyruvate carboxykinase (ATP) (Methylorubrum extorquens (strain CM4 / NCIMB 13688) (Methylobacterium extorquens)).